We begin with the raw amino-acid sequence, 98 residues long: Integration host factor subunit alpha (98 aa).

This sequence belongs to the bacterial histone-like protein family. In terms of assembly, heterodimer of an alpha and a beta chain.

Functionally, this protein is one of the two subunits of integration host factor, a specific DNA-binding protein that functions in genetic recombination as well as in transcriptional and translational control. This chain is Integration host factor subunit alpha, found in Mannheimia succiniciproducens (strain KCTC 0769BP / MBEL55E).